The primary structure comprises 596 residues: Chloride intracellular channel protein 6 (596 aa).

A disordered region spans residues 1-360 (MAEATEPKEV…ALEEGDPGQE (360 aa)). Positions 34–48 (LEGREASEEAAEAPR) are enriched in basic and acidic residues. At Ser-40 the chain carries Phosphoserine. Over residues 65–74 (GCGQDEGTGG) the composition is skewed to gly residues. The segment covering 83–98 (GPEAETPGASGAPGEA) has biased composition (low complexity). Over residues 118-130 (SAQQVQGMSSGLD) the composition is skewed to polar residues. Residues 148 to 160 (DPTASEAGEEAES) show a composition bias toward acidic residues. 2 stretches are compositionally biased toward low complexity: residues 197–213 (GSES…PQPQ) and 225–244 (GGNE…AGEG). Positions 246-290 (TLGKDGSEEAASEDARVDAHENGDQGKLQEETGEEEARPEPELKG) are enriched in basic and acidic residues. Ser-304 carries the phosphoserine modification. Residues 338–348 (ELGRVNGRREN) are compositionally biased toward basic and acidic residues. The short motif at 379 to 382 (CPFS) is the G-site element. Residues 381-401 (FSQRLFMILWLKGVIFNVTTV) form a helical membrane-spanning segment. Residues 425-596 (DGEVKTDVNK…AYSDAAKRMK (172 aa)) enclose the GST C-terminal domain.

It belongs to the chloride channel CLIC family. As to quaternary structure, monomer (soluble state). Interacts with dopamine receptors DRD2, DRD3 and DRD4. Post-translationally, phosphorylated.

The protein resides in the cytoplasm. It is found in the cell membrane. The enzyme catalyses chloride(in) = chloride(out). Its activity is regulated as follows. Channel activity is redox- and pH-regulated. Inhibited by IAA-94. Its function is as follows. In the soluble state, catalyzes glutaredoxin-like thiol disulfide exchange reactions with reduced glutathione as electron donor. Can insert into membranes and form voltage-dependent chloride-selective channels. The channel opens upon membrane depolarization at positive voltages and closes at negative membrane voltages. May play a critical role in water-secreting cells, possibly through the regulation of chloride ion transport. The sequence is that of Chloride intracellular channel protein 6 (Clic6) from Mus musculus (Mouse).